The primary structure comprises 63 residues: Beta-defensin 3 (63 aa).

A signal peptide spans 1-20 (MRIHYLLFSFLLVLLSPLSA). A propeptide spanning residues 21–22 (FS) is cleaved from the precursor. Disulfide bonds link cysteine 31–cysteine 59, cysteine 38–cysteine 52, and cysteine 42–cysteine 60.

The protein belongs to the beta-defensin family.

It localises to the secreted. Has bactericidal activity. In Rattus norvegicus (Rat), this protein is Beta-defensin 3 (Defb3).